The following is a 513-amino-acid chain: Mesoderm induction early response protein 1 (513 aa).

Low complexity predominate over residues 1-16; it reads MAEPSVESSSPGGSAT. The tract at residues 1 to 174 is disordered; sequence MAEPSVESSS…EEESEEDEDY (174 aa). Basic and acidic residues-rich tracts occupy residues 17–36 and 46–63; these read SDDHEFDPSADMLVHDFDDE and EGERNFNSEIEDLNRESD. Over residues 82–107 the composition is skewed to acidic residues; the sequence is QEDDDDEDEEEEEEEGEDDDDVDNDD. The span at 131-146 shows a compositional bias: polar residues; that stretch reads QSSNDDPAPSVASQDP. An interaction with HDAC1 region spans residues 157–261; that stretch reads YFDTNSEIEE…IKDNEQALYE (105 aa). The span at 162–174 shows a compositional bias: acidic residues; that stretch reads SEIEEESEEDEDY. Residues 182 to 280 form the ELM2 domain; sequence KEIMVGSMFQ…ESLRRLRFNV (99 aa). Residues 285–337 form the SANT domain; the sequence is EELSVWTEEECRNFEQGLKVYGKDFHVIQANKVRTRSVGECVAFYYMWKKSER. The segment at 368–513 is disordered; that stretch reads ESESAASSRA…KLEELETLDD (146 aa). Basic and acidic residues-rich tracts occupy residues 416-425 and 463-476; these read PSKDEAKPEG and SRSENDFEEKNERP. Residues 483–500 are compositionally biased toward polar residues; sequence NSNGKESPGSSEFFQEAN.

The protein resides in the nucleus. Transcriptional repressor regulating the expression of a number of genes. Probably functions through recruitment of histone deacetylases involved in chromatin silencing. The polypeptide is Mesoderm induction early response protein 1 (MIER1) (Gallus gallus (Chicken)).